A 298-amino-acid polypeptide reads, in one-letter code: MVQRITIAPQGPEFSRFVMGYWRLMDWNMSARQLVSFIEEHLDLGVTTVDHADIYGGYQCEAAFGEALKLAPHLRERMEIVSKCGIATTAREENVIGHYITDRDHIIKSAEQSLINLATDHLDLLLIHRPDPLMDADEVADAFKHLHQSGKVRHFGVSNFTPAQFALLQSRLPFTLATNQVEISPVHQPLLLDGTLDQLQQLRVRPMAWSCLGGGRLFNDDYFQPLRDELAVVAEELNAGSIEQVVYAWVLRLPSQPLPIIGSGKIERVRAAVEAETLKMTRQQWFRIRKAALGYDVP.

Tyrosine 55 serves as the catalytic Proton donor. Residues serine 158–asparagine 159, tryptophan 209–aspartate 220, and serine 263–glycine 264 contribute to the NADP(+) site.

Belongs to the aldo/keto reductase family. Aldo/keto reductase 2 subfamily.

May function as oxidoreductase. The protein is Oxidoreductase YdhF (ydhF) of Escherichia coli (strain K12).